The primary structure comprises 141 residues: Large ribosomal subunit protein uL16 (141 aa).

The segment covering 1 to 17 (MLMPKRTKFRKQMKGRN) has biased composition (basic residues). The interval 1-22 (MLMPKRTKFRKQMKGRNRGYAT) is disordered.

This sequence belongs to the universal ribosomal protein uL16 family. In terms of assembly, part of the 50S ribosomal subunit.

Binds 23S rRNA and is also seen to make contacts with the A and possibly P site tRNAs. The sequence is that of Large ribosomal subunit protein uL16 from Campylobacter curvus (strain 525.92).